The chain runs to 190 residues: Holliday junction branch migration complex subunit RuvA (190 aa).

The interval 1–64 (MIGSLTGIIE…DNLTQLYGFL (64 aa)) is domain I. Residues 65–142 (DKQEQDYMRM…KMPIEETLII (78 aa)) are domain II. Position 143 (Lys143) is a region of interest, flexible linker. Residues 143-190 (KEDDSLAALISLGYDKLKAFNAIQEIKSDFPNANIQEIIRKALQKLSQ) form a domain III region.

It belongs to the RuvA family. As to quaternary structure, homotetramer. Forms an RuvA(8)-RuvB(12)-Holliday junction (HJ) complex. HJ DNA is sandwiched between 2 RuvA tetramers; dsDNA enters through RuvA and exits via RuvB. An RuvB hexamer assembles on each DNA strand where it exits the tetramer. Each RuvB hexamer is contacted by two RuvA subunits (via domain III) on 2 adjacent RuvB subunits; this complex drives branch migration. In the full resolvosome a probable DNA-RuvA(4)-RuvB(12)-RuvC(2) complex forms which resolves the HJ.

It is found in the cytoplasm. Its function is as follows. The RuvA-RuvB-RuvC complex processes Holliday junction (HJ) DNA during genetic recombination and DNA repair, while the RuvA-RuvB complex plays an important role in the rescue of blocked DNA replication forks via replication fork reversal (RFR). RuvA specifically binds to HJ cruciform DNA, conferring on it an open structure. The RuvB hexamer acts as an ATP-dependent pump, pulling dsDNA into and through the RuvAB complex. HJ branch migration allows RuvC to scan DNA until it finds its consensus sequence, where it cleaves and resolves the cruciform DNA. This chain is Holliday junction branch migration complex subunit RuvA, found in Ehrlichia canis (strain Jake).